Consider the following 552-residue polypeptide: Formate--tetrahydrofolate ligase (552 aa).

62-69 serves as a coordination point for ATP; sequence TPAGEGKS.

Belongs to the formate--tetrahydrofolate ligase family.

The enzyme catalyses (6S)-5,6,7,8-tetrahydrofolate + formate + ATP = (6R)-10-formyltetrahydrofolate + ADP + phosphate. It participates in one-carbon metabolism; tetrahydrofolate interconversion. This Ligilactobacillus salivarius (strain UCC118) (Lactobacillus salivarius) protein is Formate--tetrahydrofolate ligase.